Consider the following 338-residue polypeptide: Alcohol dehydrogenase (338 aa).

Zn(2+) contacts are provided by cysteine 38, histidine 61, glutamate 62, cysteine 92, cysteine 95, cysteine 98, cysteine 106, and cysteine 148.

The protein belongs to the zinc-containing alcohol dehydrogenase family. In terms of assembly, homotetramer. Requires Zn(2+) as cofactor.

The enzyme catalyses a primary alcohol + NAD(+) = an aldehyde + NADH + H(+). It carries out the reaction a secondary alcohol + NAD(+) = a ketone + NADH + H(+). The catalysed reaction is ethanol + NAD(+) = acetaldehyde + NADH + H(+). It catalyses the reaction 1-propanol + NAD(+) = propanal + NADH + H(+). The enzyme catalyses butan-1-ol + NAD(+) = butanal + NADH + H(+). It carries out the reaction propan-2-ol + NAD(+) = acetone + NADH + H(+). Functionally, psychrophilic alcohol dehydrogenase that exhibits a wide range of substrate specificity, oxidizing mainly primary and secondary aliphatic alcohols, utilizing NAD(+) as a cosubstrate. In vitro, shows highest reaction rates for ethanol as a substrate and gradually decreases its reaction rates as the length and branching of the carbon chain of the alcohol substrates increase. To a lesser extent, is also able to reduce aldehydes and ketones. Do not catalyze the further oxidation of aldehydes to carboxylic acids. Cannot use NADP(+) instead of NAD(+). The polypeptide is Alcohol dehydrogenase (Moraxella sp. (strain TAE123)).